Here is a 90-residue protein sequence, read N- to C-terminus: Probable Fe(2+)-trafficking protein (90 aa).

It belongs to the Fe(2+)-trafficking protein family.

Its function is as follows. Could be a mediator in iron transactions between iron acquisition and iron-requiring processes, such as synthesis and/or repair of Fe-S clusters in biosynthetic enzymes. The chain is Probable Fe(2+)-trafficking protein from Dechloromonas aromatica (strain RCB).